The sequence spans 728 residues: Polyribonucleotide nucleotidyltransferase (728 aa).

Mg(2+)-binding residues include Asp-489 and Asp-495. The KH domain maps to 556–615 (PKIDTIKIDVDKIKIVIGKGGETIDKIIAETGVKIDIDEEGNVSIYSSDQDAINRAKEII). The S1 motif domain maps to 625–693 (DEVYHAKVVR…AKGRVDASMK (69 aa)). Residues 691-728 (SMKALLPRPPKPEKSDKHHDKGHPHKKHEEAPLTQTEE) are disordered. Over residues 700-709 (PKPEKSDKHH) the composition is skewed to basic and acidic residues.

The protein belongs to the polyribonucleotide nucleotidyltransferase family. Mg(2+) serves as cofactor.

The protein localises to the cytoplasm. It carries out the reaction RNA(n+1) + phosphate = RNA(n) + a ribonucleoside 5'-diphosphate. Involved in mRNA degradation. Catalyzes the phosphorolysis of single-stranded polyribonucleotides processively in the 3'- to 5'-direction. This chain is Polyribonucleotide nucleotidyltransferase, found in Streptococcus gordonii (strain Challis / ATCC 35105 / BCRC 15272 / CH1 / DL1 / V288).